A 207-amino-acid polypeptide reads, in one-letter code: Probable RNA 2'-phosphotransferase (207 aa).

It belongs to the KptA/TPT1 family.

Its function is as follows. Removes the 2'-phosphate from RNA via an intermediate in which the phosphate is ADP-ribosylated by NAD followed by a presumed transesterification to release the RNA and generate ADP-ribose 1''-2''-cyclic phosphate (APPR&gt;P). May function as an ADP-ribosylase. In Methanosarcina mazei (strain ATCC BAA-159 / DSM 3647 / Goe1 / Go1 / JCM 11833 / OCM 88) (Methanosarcina frisia), this protein is Probable RNA 2'-phosphotransferase.